A 358-amino-acid polypeptide reads, in one-letter code: Probable tartrate dehydrogenase/decarboxylase TtuC' (358 aa).

Mn(2+) contacts are provided by aspartate 222, aspartate 246, and aspartate 250.

It belongs to the isocitrate and isopropylmalate dehydrogenases family. Requires Mg(2+) as cofactor. It depends on Mn(2+) as a cofactor. The cofactor is K(+).

It localises to the cytoplasm. It catalyses the reaction tartrate + NAD(+) = 2-hydroxy-3-oxosuccinate + NADH + H(+). The enzyme catalyses (2R,3S)-tartrate + NAD(+) = 2-hydroxy-3-oxosuccinate + NADH + H(+). It carries out the reaction (2R,3R)-tartrate + NAD(+) = 2-hydroxy-3-oxosuccinate + NADH + H(+). The catalysed reaction is (2R,3R)-tartrate + H(+) = (R)-glycerate + CO2. It catalyses the reaction (R)-malate + NAD(+) = pyruvate + CO2 + NADH. The protein operates within carbohydrate acid metabolism; tartrate degradation; 2-hydroxy-3-oxosuccinate from L-tartrate: step 1/1. Its pathway is carbohydrate acid metabolism; tartrate degradation; 2-hydroxy-3-oxosuccinate from meso-tartrate: step 1/1. It functions in the pathway carbohydrate acid metabolism; tartrate degradation; D-glycerate from L-tartrate: step 1/1. Has multiple catalytic activities. Apart from catalyzing the oxidation of (+)-tartrate to oxaloglycolate, also converts meso-tartrate to D-glycerate and catalyzes the oxidative decarboxylation of D-malate to pyruvate. This chain is Probable tartrate dehydrogenase/decarboxylase TtuC' (ttuC'), found in Agrobacterium vitis (Rhizobium vitis).